The primary structure comprises 396 residues: 1-deoxy-D-xylulose 5-phosphate reductoisomerase (396 aa).

Positions 13, 14, 15, 16, and 127 each coordinate NADPH. Lys-128 contributes to the 1-deoxy-D-xylulose 5-phosphate binding site. Glu-129 is a binding site for NADPH. Residue Asp-153 participates in Mn(2+) binding. 1-deoxy-D-xylulose 5-phosphate contacts are provided by Ser-154, Glu-155, Ser-184, and His-207. Residue Glu-155 participates in Mn(2+) binding. Gly-213 contacts NADPH. 1-deoxy-D-xylulose 5-phosphate is bound by residues Ser-220, Asn-225, Lys-226, and Glu-229. Glu-229 provides a ligand contact to Mn(2+).

This sequence belongs to the DXR family. It depends on Mg(2+) as a cofactor. The cofactor is Mn(2+).

The enzyme catalyses 2-C-methyl-D-erythritol 4-phosphate + NADP(+) = 1-deoxy-D-xylulose 5-phosphate + NADPH + H(+). Its pathway is isoprenoid biosynthesis; isopentenyl diphosphate biosynthesis via DXP pathway; isopentenyl diphosphate from 1-deoxy-D-xylulose 5-phosphate: step 1/6. Its function is as follows. Catalyzes the NADPH-dependent rearrangement and reduction of 1-deoxy-D-xylulose-5-phosphate (DXP) to 2-C-methyl-D-erythritol 4-phosphate (MEP). This chain is 1-deoxy-D-xylulose 5-phosphate reductoisomerase, found in Stutzerimonas stutzeri (strain A1501) (Pseudomonas stutzeri).